A 353-amino-acid polypeptide reads, in one-letter code: Nicotinate-nucleotide--dimethylbenzimidazole phosphoribosyltransferase (353 aa).

The active-site Proton acceptor is Glu-319.

It belongs to the CobT family.

It catalyses the reaction 5,6-dimethylbenzimidazole + nicotinate beta-D-ribonucleotide = alpha-ribazole 5'-phosphate + nicotinate + H(+). The protein operates within nucleoside biosynthesis; alpha-ribazole biosynthesis; alpha-ribazole from 5,6-dimethylbenzimidazole: step 1/2. Functionally, catalyzes the synthesis of alpha-ribazole-5'-phosphate from nicotinate mononucleotide (NAMN) and 5,6-dimethylbenzimidazole (DMB). This is Nicotinate-nucleotide--dimethylbenzimidazole phosphoribosyltransferase from Prosthecochloris aestuarii (strain DSM 271 / SK 413).